A 132-amino-acid chain; its full sequence is Bombinin-like peptides (132 aa).

The first 18 residues, 1–18 (MNFKYIIAVSFLIASAYA), serve as a signal peptide directing secretion. A propeptide spanning residues 19-42 (RSEEYDIQSLSQRDVLEEESLRKI) is cleaved from the precursor. Phenylalanine 68 is subject to Phenylalanine amide. Residues 72–112 (TAEDHEVMKRLEAAMRDLDSLDYPEEASERETRGFNQEEKE) constitute a propeptide that is removed on maturation. A Leucine amide modification is found at leucine 131.

The protein belongs to the bombinin family. As to expression, expressed by the skin glands.

The protein localises to the secreted. Its function is as follows. Has antimicrobial activity against Gram-negative bacterium E.coli (MIC=26.3 uM), Gram-positive bacterium S.aureus (MIC=26.3 uM) and yeast C.albicans (MIC=52.5 uM). Has moderate hemolytic activity towards human erythrocytes at a concentration of 52.2 uM. Functionally, has no antimicrobial activity at concentrations up to 161 uM. Has moderate hemolytic activity towards human erythrocytes at a concentration of 40.3 uM. The chain is Bombinin-like peptides from Bombina orientalis (Oriental fire-bellied toad).